We begin with the raw amino-acid sequence, 1098 residues long: Protein diaphanous homolog 2 (1098 aa).

Methionine 1 bears the N-acetylmethionine mark. The segment at 1–62 (MEELGAAASG…SFRKSATKRE (62 aa)) is disordered. The segment covering 36 to 52 (ANEEETRNKPKLRDRIT) has biased composition (basic and acidic residues). The region spanning 90 to 463 (SLILSEKEVL…QIVLHCSGMD (374 aa)) is the GBD/FH3 domain. 2 coiled-coil regions span residues 375-416 (QLRV…NMLK) and 490-539 (EENE…GQGV). 5 disordered regions span residues 537 to 565 (QGVP…PPPP), 578 to 611 (PPPP…GVFP), 679 to 699 (MKGQ…PKKK), 1007 to 1047 (HKRK…NKEG), and 1063 to 1098 (GAAF…MSSK). Composition is skewed to pro residues over residues 543–565 (IPGP…PPPP) and 578–608 (PPPP…PPGG). Residues 544 to 620 (PGPPPPPPLP…PLLSGPIELP (77 aa)) form the FH1 domain. One can recognise an FH2 domain in the interval 625–1025 (QKKLYKPDIP…SRRAKLAKEK (401 aa)). Residues 999 to 1050 (FLEALKENHKRKEMEEKSRRAKLAKEKAEQEKLERQKKKKQLIDINKEGDET) are a coiled coil. Composition is skewed to basic and acidic residues over residues 1007–1032 (HKRK…EKLE) and 1075–1087 (RNPD…LERS). The region spanning 1048–1078 (DETGVMDNLLEALQSGAAFRDRRKRIPRNPD) is the DAD domain.

Belongs to the formin homology family. Diaphanous subfamily. As to quaternary structure, interacts with MAPRE1 and APC.

Functionally, may be involved in oogenesis. The protein is Protein diaphanous homolog 2 (Diaph2) of Mus musculus (Mouse).